A 969-amino-acid polypeptide reads, in one-letter code: Translation initiation factor IF-2 (969 aa).

Residues 49–63 (HLRKSHGATDGDKRK) are compositionally biased toward basic and acidic residues. Disordered regions lie at residues 49-85 (HLRK…KART), 100-128 (DDVS…REEE), and 143-380 (LRER…SFQA). The span at 105–114 (VAEQGQAQVA) shows a compositional bias: low complexity. Over residues 143–181 (LRERQERLEREEAERRAREEAAEAERRRAEEEAAAKRAA) the composition is skewed to basic and acidic residues. Positions 182-206 (AEAAAAQQAAQQAAAAQQAAAPADS) are enriched in low complexity. Basic and acidic residues predominate over residues 209–260 (DEARAAAERAAQREAAKKAEDAAREAAEKARAEQEEIRKRREAAEAEARAIR). Residues 301 to 323 (AQARPAAKKPAAAPAATPAPAGA) show a composition bias toward low complexity. Residues 353 to 366 (SSGGVDRGWRGGPK) are compositionally biased toward gly residues. Residues 469-638 (PRPPVVTVMG…LLQAEVLELK (170 aa)) enclose the tr-type G domain. A G1 region spans residues 478–485 (GHVDHGKT). 478 to 485 (GHVDHGKT) provides a ligand contact to GTP. Residues 503-507 (GITQH) form a G2 region. The tract at residues 524 to 527 (DTPG) is G3. Residues 524–528 (DTPGH) and 578–581 (NKID) contribute to the GTP site. A G4 region spans residues 578–581 (NKID). A G5 region spans residues 614–616 (SAK).

It belongs to the TRAFAC class translation factor GTPase superfamily. Classic translation factor GTPase family. IF-2 subfamily.

Its subcellular location is the cytoplasm. One of the essential components for the initiation of protein synthesis. Protects formylmethionyl-tRNA from spontaneous hydrolysis and promotes its binding to the 30S ribosomal subunits. Also involved in the hydrolysis of GTP during the formation of the 70S ribosomal complex. In Burkholderia multivorans (strain ATCC 17616 / 249), this protein is Translation initiation factor IF-2.